Reading from the N-terminus, the 352-residue chain is Mitochondrial adenine nucleotide transporter ADNT1 (352 aa).

3 Solcar repeats span residues 36–123 (KSIC…ASNG), 139–227 (LTPL…LKDW), and 242–343 (LTVV…VKDV). A run of 6 helical transmembrane segments spans residues 41–61 (SLFAGGVAGGVSRTAVAPLER), 100–120 (GTNCARIVPNSAVKFFSYEQA), 145–162 (LGAGATAGIIAMSATYPM), 202–221 (GWLPSVIGVVPYVGLNFSVY), 242–263 (LTVVTRLTCGAIAGTVGQTIAY), and 324–340 (VKVVPSIAIAFVTYEMV).

The protein belongs to the mitochondrial carrier (TC 2.A.29) family. In terms of tissue distribution, expressed in seedling radicles and roots, vasculature of cotyledons, leaf primordia, leaves and sepals.

It is found in the mitochondrion inner membrane. Inhibited by pyridoxal 5-phosphate, bathophenanthroline, mersalyl, p-hydroxymercuribenzoate and tannic acid. Its function is as follows. Mitochondrial adenylate carrier that catalyzes specifically the transport of ATP, ADP and AMP by a counter-exchange mechanism across the inner mitochondrial membrane. Substrate preference in reconstituted proteoliposomes is ATP &gt; AMP &gt; ADP. May play a role in oxidative phosphorylation and be important for the provision of energy required to support growth in heterotrophic tissues. This Arabidopsis thaliana (Mouse-ear cress) protein is Mitochondrial adenine nucleotide transporter ADNT1 (ADNT1).